Reading from the N-terminus, the 322-residue chain is Phthalate dioxygenase reductase (322 aa).

The FAD-binding FR-type domain occupies 7–109 (DGFLRLKIAS…SLPRNEFPLD (103 aa)). FMN is bound by residues 56–57 (RT), 73–75 (AVK), 81–84 (RGGS), threonine 125, and phenylalanine 226. Residues 239–322 (FTVRLSRSGT…AKSAELVLDL (84 aa)) enclose the 2Fe-2S ferredoxin-type domain. Cysteine 273 is a [2Fe-2S] cluster binding site. Residue serine 275 participates in FMN binding. [2Fe-2S] cluster is bound by residues cysteine 278, cysteine 281, and cysteine 309.

Belongs to the PDR/VanB family. In terms of assembly, monomer. Requires FMN as cofactor.

Component of the electron transfer chain involved in pyridine nucleotide-dependent dihydroxylation of phthalate. Utilizes FMN to mediate electron transfer from the two-electron donor, NADH, to the one-electron acceptor, (2Fe-2S). The protein is Phthalate dioxygenase reductase (ophA1) of Burkholderia cepacia (Pseudomonas cepacia).